A 450-amino-acid chain; its full sequence is Probable ECA polymerase (450 aa).

Transmembrane regions (helical) follow at residues 6–26, 37–57, 63–83, 118–138, 155–175, 181–201, 207–227, 228–248, 341–361, 378–398, and 410–430; these read FSGLFVVWLLCTLFIATLTWF, VFFSLLFLLTFFFGFPLTSVL, VGVAPPEILLQALLSAGCFYA, VILMGIALVSVGIFFMHNGFL, GVALKRFFYFFIPAMLVVYFL, AWLFFLVSTVAFGLLTYMIVG, IIIAFAIFLFIGIIRGWISLW, MLAAAGVLGIVGMFWLALKRY, LVVMGGALFIPLGAIVVGLII, YKAAILHSFCFGAIFNMIVLA, and VFFIVVFGACLMIAKLLYWLF.

It belongs to the WzyE family. Probably part of a complex composed of WzxE, WzyE and WzzE.

The protein resides in the cell inner membrane. It functions in the pathway bacterial outer membrane biogenesis; enterobacterial common antigen biosynthesis. Its function is as follows. Probably involved in the polymerization of enterobacterial common antigen (ECA) trisaccharide repeat units. This chain is Probable ECA polymerase, found in Escherichia coli O7:K1 (strain IAI39 / ExPEC).